The following is a 371-amino-acid chain: uncharacterized protein (371 aa).

The ABC transporter domain occupies 20–250; the sequence is VTIRNVTKRY…PANIFVAGFI (231 aa). An ATP-binding site is contributed by 52 to 59; the sequence is GPSGCGKS.

The protein belongs to the ABC transporter superfamily.

It is found in the cell inner membrane. In terms of biological role, probably part of a binding-protein-dependent transport system y4oPQRS. This system probably transports a sugar-like molecule. Probably responsible for energy coupling to the transport system. This is an uncharacterized protein from Sinorhizobium fredii (strain NBRC 101917 / NGR234).